The following is a 47-amino-acid chain: Potassium channel toxin gamma-KTx 5.2 (47 aa).

Intrachain disulfides connect Cys5–Cys23, Cys11–Cys34, Cys20–Cys39, and Cys24–Cys41.

Belongs to the ergtoxin family. Gamma-KTx 5 subfamily. As to expression, expressed by the venom gland.

It localises to the secreted. Functionally, reversibly blocks Kv11/ERG potassium channels. The sequence is that of Potassium channel toxin gamma-KTx 5.2 from Centruroides gracilis (Slenderbrown scorpion).